The primary structure comprises 238 residues: MTTTYANADPGELEKFSELAHRWWDPNSEFKPLHEINPLRLDWIQSTAPLAGKRVVDVGCGGGILSESMARAGANVKGIDLSRKALRVADLHSLEAGVAVDYEEIAAEALAAREPGSFDVVTCMEMLEHVPDPASVVRACATLVKPGGHVFFSTIHRNAKAYLLAVIGAEYVLNMLPRGTHDYAKFIRPSELAGFARTAGLEPAQLRGLEYNPLTGRYALTHDTSVNYLIATRRPDAP.

Residues Arg40, Gly59, Asp80, and Met124 each coordinate S-adenosyl-L-methionine.

Belongs to the methyltransferase superfamily. UbiG/COQ3 family.

The enzyme catalyses a 3-demethylubiquinol + S-adenosyl-L-methionine = a ubiquinol + S-adenosyl-L-homocysteine + H(+). It catalyses the reaction a 3-(all-trans-polyprenyl)benzene-1,2-diol + S-adenosyl-L-methionine = a 2-methoxy-6-(all-trans-polyprenyl)phenol + S-adenosyl-L-homocysteine + H(+). It participates in cofactor biosynthesis; ubiquinone biosynthesis. O-methyltransferase that catalyzes the 2 O-methylation steps in the ubiquinone biosynthetic pathway. In Ralstonia nicotianae (strain ATCC BAA-1114 / GMI1000) (Ralstonia solanacearum), this protein is Ubiquinone biosynthesis O-methyltransferase.